The sequence spans 540 residues: Intestinal-type alkaline phosphatase 1 (540 aa).

The signal sequence occupies residues 1–20 (MQGDWVLLLLLGLRIHLSFG). Residue Asp-62 coordinates Mg(2+). Residues Asp-62 and Ser-112 each contribute to the Zn(2+) site. The active-site Phosphoserine intermediate is Ser-112. A disulfide bridge connects residues Cys-141 and Cys-203. Asn-142 carries N-linked (GlcNAc...) asparagine glycosylation. Ser-175 contacts Mg(2+). Ca(2+) is bound by residues Glu-236, Phe-289, and Glu-290. N-linked (GlcNAc...) asparagine glycosylation occurs at Asn-301. Asp-305 is a binding site for Ca(2+). Residue Glu-331 coordinates Mg(2+). Zn(2+) is bound by residues Asp-336, His-340, Asp-377, and His-378. Asn-428 is a glycosylation site (N-linked (GlcNAc...) asparagine). A Zn(2+)-binding site is contributed by His-452. A disulfide bridge connects residues Cys-487 and Cys-494. A lipid anchor (GPI-anchor amidated asparagine) is attached at Asn-511. Residues 512–540 (SAITMNNVLLSLQLLVSMLLLVGTALVVS) constitute a propeptide, removed in mature form.

Belongs to the alkaline phosphatase family. In terms of assembly, homodimer. Mg(2+) serves as cofactor. Requires Zn(2+) as cofactor. It depends on Ca(2+) as a cofactor.

The protein localises to the cell membrane. The catalysed reaction is a phosphate monoester + H2O = an alcohol + phosphate. Alkaline phosphatase that can hydrolyze various phosphate compounds. The protein is Intestinal-type alkaline phosphatase 1 (Alpi) of Rattus norvegicus (Rat).